The chain runs to 154 residues: Redox-sensitive transcriptional activator SoxR (154 aa).

One can recognise an HTH merR-type domain in the interval 11–79 (LLTPGEVAKR…LATIGEAFGV (69 aa)). Positions 14 to 33 (PGEVAKRSGVAVSALHFYES) form a DNA-binding region, H-T-H motif. [2Fe-2S] cluster is bound by residues C119, C122, C124, and C130. Residues 119 to 130 (CIGCGCLSRSDC) form a might be part of a sensor region region. The disordered stretch occupies residues 135-154 (PGDRLGEEGTGARLLEDEQN).

As to quaternary structure, homodimer.

In terms of biological role, activates the transcription of the soxS gene which itself controls the superoxide response regulon. SoxR contains a 2Fe-2S iron-sulfur cluster that may act as a redox sensor system that recognizes superoxide. The variable redox state of the Fe-S cluster is employed in vivo to modulate the transcriptional activity of SoxR in response to specific types of oxidative stress. Upon reduction of 2Fe-2S cluster, SoxR reversibly loses its transcriptional activity, but retains its DNA binding affinity. In Escherichia coli O157:H7, this protein is Redox-sensitive transcriptional activator SoxR (soxR).